The sequence spans 246 residues: UDP-N-acetyl-D-mannosaminuronic acid transferase (246 aa).

The protein belongs to the glycosyltransferase 26 family.

The catalysed reaction is UDP-N-acetyl-alpha-D-mannosaminouronate + N-acetyl-alpha-D-glucosaminyl-di-trans,octa-cis-undecaprenyl diphosphate = beta-D-ManNAcA-(1-&gt;4)-alpha-D-GlcNAc-di-trans,octa-cis-undecaprenyl diphosphate + UDP + H(+). The protein operates within bacterial outer membrane biogenesis; enterobacterial common antigen biosynthesis. In terms of biological role, catalyzes the synthesis of Und-PP-GlcNAc-ManNAcA (Lipid II), the second lipid-linked intermediate involved in enterobacterial common antigen (ECA) synthesis. The sequence is that of UDP-N-acetyl-D-mannosaminuronic acid transferase from Escherichia fergusonii (strain ATCC 35469 / DSM 13698 / CCUG 18766 / IAM 14443 / JCM 21226 / LMG 7866 / NBRC 102419 / NCTC 12128 / CDC 0568-73).